A 344-amino-acid polypeptide reads, in one-letter code: Acetylpolyamine amidohydrolase 2 (344 aa).

Catalysis depends on histidine 159, which acts as the Proton donor/acceptor. Positions 195, 197, and 284 each coordinate Zn(2+).

Belongs to the histone deacetylase family. In terms of assembly, homodimer. Zn(2+) serves as cofactor.

It catalyses the reaction N-acetylputrescine + H2O = putrescine + acetate. The enzyme catalyses N-acetylcadaverine + H2O = cadaverine + acetate. The protein operates within amine and polyamine metabolism. Catalyzes the deacetylation of acetylated polyamines such as N-acetylputrescine and N-acetylcadaverine. Plays an important role in the metabolism of acetylated polyamines in P.aeruginosa. Is involved in the degradation pathways of N-acetylputrescine and N-acetylcadaverine, that allow P.aeruginosa to utilize these acetylpolyamines as a carbon source under glucose starvation. Shows nearly no activity against N(1)-acetylspermine and N(1)-acetylspermidine. Can also hydrolyze artificial trifluoroacetylated lysine-derivative, and to a lesser extent, acetylated lysine-derivative. This Pseudomonas aeruginosa (strain ATCC 15692 / DSM 22644 / CIP 104116 / JCM 14847 / LMG 12228 / 1C / PRS 101 / PAO1) protein is Acetylpolyamine amidohydrolase 2.